The sequence spans 920 residues: Isoleucine--tRNA ligase (920 aa).

A 'HIGH' region motif is present at residues 58–68 (PYANGHLHLGH). Position 569 (Glu569) interacts with L-isoleucyl-5'-AMP. Positions 610-614 (KMSKS) match the 'KMSKS' region motif. Lys613 is a binding site for ATP. Zn(2+) contacts are provided by Cys895, Cys898, Cys910, and Cys913.

This sequence belongs to the class-I aminoacyl-tRNA synthetase family. IleS type 1 subfamily. In terms of assembly, monomer. The cofactor is Zn(2+).

It is found in the cytoplasm. The enzyme catalyses tRNA(Ile) + L-isoleucine + ATP = L-isoleucyl-tRNA(Ile) + AMP + diphosphate. Its function is as follows. Catalyzes the attachment of isoleucine to tRNA(Ile). As IleRS can inadvertently accommodate and process structurally similar amino acids such as valine, to avoid such errors it has two additional distinct tRNA(Ile)-dependent editing activities. One activity is designated as 'pretransfer' editing and involves the hydrolysis of activated Val-AMP. The other activity is designated 'posttransfer' editing and involves deacylation of mischarged Val-tRNA(Ile). This chain is Isoleucine--tRNA ligase, found in Helicobacter pylori (strain J99 / ATCC 700824) (Campylobacter pylori J99).